A 203-amino-acid polypeptide reads, in one-letter code: Urease accessory protein UreG (203 aa).

Residue 11–18 (GPVGSGKT) participates in GTP binding.

This sequence belongs to the SIMIBI class G3E GTPase family. UreG subfamily. In terms of assembly, homodimer. UreD, UreF and UreG form a complex that acts as a GTP-hydrolysis-dependent molecular chaperone, activating the urease apoprotein by helping to assemble the nickel containing metallocenter of UreC. The UreE protein probably delivers the nickel.

It localises to the cytoplasm. Its function is as follows. Facilitates the functional incorporation of the urease nickel metallocenter. This process requires GTP hydrolysis, probably effectuated by UreG. The polypeptide is Urease accessory protein UreG (Prochlorococcus marinus (strain MIT 9215)).